The following is a 167-amino-acid chain: MQDEFDLFRTETKGIKPIKQDTFVAPRQKRDQKKIELKELRAKEDTLFYFSDEYEPLLNDNDGVVKYLRDGEDSHLLKQLRRGDFSPELFLDLHGLTREQAKQELAALLLACENEHVDCASIMTGYGTFTLKKQIPRWLVQHPKVRALHQAPREWGGEAAILILVDL.

One can recognise a Smr domain in the interval 91-166; sequence LDLHGLTREQ…GEAAILILVD (76 aa).

It belongs to the SmrB family. As to quaternary structure, associates with collided ribosomes, but not with correctly translating polysomes.

In terms of biological role, acts as a ribosome collision sensor. Detects stalled/collided disomes (pairs of ribosomes where the leading ribosome is stalled and a second ribosome has collided with it) and endonucleolytically cleaves mRNA at the 5' boundary of the stalled ribosome. Stalled/collided disomes form a new interface (primarily via the 30S subunits) that binds SmrB. Cleaved mRNA becomes available for tmRNA ligation, leading to ribosomal subunit dissociation and rescue of stalled ribosomes. This Haemophilus influenzae (strain ATCC 51907 / DSM 11121 / KW20 / Rd) protein is Ribosome rescue factor SmrB.